A 422-amino-acid polypeptide reads, in one-letter code: COUP transcription factor 1 (422 aa).

The tract at residues 1–80 (MAMVVSSWRD…QGPPGSGQSQ (80 aa)) is disordered. A compositionally biased stretch (low complexity) spans 39-66 (EQQQAGSGAPHTPQTPGQPGAPATPGTQ). Positions 82 to 157 (HIECVVCGDK…VGMRREAVQR (76 aa)) form a DNA-binding region, nuclear receptor. 2 NR C4-type zinc fingers span residues 85-105 (CVVCGDKSSGKHYGQFTCEGC) and 121-145 (CRANRNCPIDQHHRNQCQYCRLKKC). Positions 183–409 (YLSGYISLLL…TLIRDMLLSG (227 aa)) constitute an NR LBD domain. Positions 343–422 (LQEKSQCALE…NWPYMSIQCS (80 aa)) are important for dimerization.

It belongs to the nuclear hormone receptor family. NR2 subfamily. Binds DNA as dimer; homodimer and probable heterodimer with NR2F6. Interacts with GTF2B; this interaction is direct. Interacts with COPS2.

Its subcellular location is the nucleus. Its function is as follows. Coup (chicken ovalbumin upstream promoter) transcription factor binds to the ovalbumin promoter and, in conjunction with another protein (S300-II) stimulates initiation of transcription. Binds to both direct repeats and palindromes of the 5'-AGGTCA-3' motif. Represses transcriptional activity of LHCG. This chain is COUP transcription factor 1 (Nr2f1), found in Mus musculus (Mouse).